Consider the following 48-residue polypeptide: Phospholipase A2 superbin d (48 aa).

Tyrosine 28, glycine 30, and glycine 32 together coordinate Ca(2+). Cysteine 29 and cysteine 45 are disulfide-bonded. Histidine 48 is a catalytic residue.

The cofactor is Ca(2+). In terms of tissue distribution, expressed by the venom gland.

The protein localises to the secreted. The enzyme catalyses a 1,2-diacyl-sn-glycero-3-phosphocholine + H2O = a 1-acyl-sn-glycero-3-phosphocholine + a fatty acid + H(+). In terms of biological role, snake venom phospholipase A2 (PLA2) that inhibits collagen-induced platelet aggregation. In terms of inhibition of platelet aggregation, superbin d is less potent as superbin a, b, and c. PLA2 catalyzes the calcium-dependent hydrolysis of the 2-acyl groups in 3-sn-phosphoglycerides. This chain is Phospholipase A2 superbin d, found in Austrelaps superbus (Lowland copperhead snake).